The primary structure comprises 464 residues: Protein FAM90A24 (464 aa).

Disordered regions lie at residues 1–42, 69–389, and 415–437; these read MMAR…DPRL, VPAT…HDGA, and HSPE…SEAP. Basic and acidic residues-rich tracts occupy residues 74–89 and 97–114; these read GKKE…KPRG and NKDK…DPQR. Over residues 180-197 the composition is skewed to low complexity; that stretch reads LASLSPLRKASLSSSSSL.

This sequence belongs to the FAM90 family.

The sequence is that of Protein FAM90A24 from Homo sapiens (Human).